The primary structure comprises 428 residues: Cyclic AMP-responsive element-binding protein 3-like protein 3-A (428 aa).

Over 1-286 the chain is Cytoplasmic; it reads MENYSDQGGD…VMNGSNKPVQ (286 aa). Positions 67–83 are enriched in low complexity; it reads VSGSPVWSPSPSDSGIS. Positions 67 to 104 are disordered; the sequence is VSGSPVWSPSPSDSGISEDPHSDHIDSPPPNASPPMEP. Over residues 93-103 the composition is skewed to pro residues; it reads SPPPNASPPME. Residues 210–273 enclose the bZIP domain; the sequence is ILKKIRRKIR…ISLMEQLRRL (64 aa). Residues 212-241 are basic motif; sequence KKIRRKIRNKQSAQESRKKKKEYIDGLESR. The segment at 252 to 273 is leucine-zipper; the sequence is LQRKVFQLEKCNISLMEQLRRL. A helical; Signal-anchor for type II membrane protein transmembrane segment spans residues 287-303; the sequence is AGTCVLVLLLSFTLILL. At 304–428 the chain is on the lumenal side; that stretch reads PNLKPFTDTK…SRRSPHADDM (125 aa). Positions 381 to 428 are disordered; it reads TEYDPESHNHSFDQHDEHHHGDPITGHVATVTLNPRRGSRRSPHADDM. The span at 385 to 402 shows a compositional bias: basic and acidic residues; sequence PESHNHSFDQHDEHHHGD. Asn389 carries an N-linked (GlcNAc...) asparagine glycan.

It belongs to the bZIP family. ATF subfamily. Binds DNA as a dimer. Controlled by regulated intramembrane proteolysis (RIP). A fragment containing the cytoplasmic transcription factor domain is released by proteolysis. The cleavage seems to be performed sequentially by site-1 and site-2 proteases.

Its subcellular location is the endoplasmic reticulum membrane. The protein localises to the nucleus. Transcriptional activator. Binds the cAMP response element (CRE). Activates transcription through box-B element and CRE. Seems to function synergistically with atf6. Regulates FGF21 transcription. This chain is Cyclic AMP-responsive element-binding protein 3-like protein 3-A (creb3l3a), found in Danio rerio (Zebrafish).